The sequence spans 204 residues: Holliday junction branch migration complex subunit RuvA (204 aa).

The interval 1–64 (MIAKLTGILD…ETDQRLIGFT (64 aa)) is domain I. Positions 65 to 143 (SAGERAWFRL…GLAGYASPVG (79 aa)) are domain II. The flexible linker stretch occupies residues 144–154 (PGGEAFVAPPG). The interval 154–204 (GNASADAVSALQNLGFKPAVASSAVAAAVKELGEDAGLNDLVRVALKRAAG) is domain III.

The protein belongs to the RuvA family. As to quaternary structure, homotetramer. Forms an RuvA(8)-RuvB(12)-Holliday junction (HJ) complex. HJ DNA is sandwiched between 2 RuvA tetramers; dsDNA enters through RuvA and exits via RuvB. An RuvB hexamer assembles on each DNA strand where it exits the tetramer. Each RuvB hexamer is contacted by two RuvA subunits (via domain III) on 2 adjacent RuvB subunits; this complex drives branch migration. In the full resolvosome a probable DNA-RuvA(4)-RuvB(12)-RuvC(2) complex forms which resolves the HJ.

The protein localises to the cytoplasm. Its function is as follows. The RuvA-RuvB-RuvC complex processes Holliday junction (HJ) DNA during genetic recombination and DNA repair, while the RuvA-RuvB complex plays an important role in the rescue of blocked DNA replication forks via replication fork reversal (RFR). RuvA specifically binds to HJ cruciform DNA, conferring on it an open structure. The RuvB hexamer acts as an ATP-dependent pump, pulling dsDNA into and through the RuvAB complex. HJ branch migration allows RuvC to scan DNA until it finds its consensus sequence, where it cleaves and resolves the cruciform DNA. This chain is Holliday junction branch migration complex subunit RuvA, found in Novosphingobium aromaticivorans (strain ATCC 700278 / DSM 12444 / CCUG 56034 / CIP 105152 / NBRC 16084 / F199).